The chain runs to 302 residues: tRNA-cytidine(32) 2-sulfurtransferase (302 aa).

Residues 45–50 (SGGKDS) carry the PP-loop motif motif. [4Fe-4S] cluster contacts are provided by Cys120, Cys123, and Cys211.

The protein belongs to the TtcA family. Homodimer. The cofactor is Mg(2+). It depends on [4Fe-4S] cluster as a cofactor.

The protein localises to the cytoplasm. The enzyme catalyses cytidine(32) in tRNA + S-sulfanyl-L-cysteinyl-[cysteine desulfurase] + AH2 + ATP = 2-thiocytidine(32) in tRNA + L-cysteinyl-[cysteine desulfurase] + A + AMP + diphosphate + H(+). Its pathway is tRNA modification. Catalyzes the ATP-dependent 2-thiolation of cytidine in position 32 of tRNA, to form 2-thiocytidine (s(2)C32). The sulfur atoms are provided by the cysteine/cysteine desulfurase (IscS) system. This Cellvibrio japonicus (strain Ueda107) (Pseudomonas fluorescens subsp. cellulosa) protein is tRNA-cytidine(32) 2-sulfurtransferase.